The following is a 260-amino-acid chain: Ribose-5-phosphate isomerase (260 aa).

This sequence belongs to the ribose 5-phosphate isomerase family.

Its subcellular location is the cytoplasm. The catalysed reaction is aldehydo-D-ribose 5-phosphate = D-ribulose 5-phosphate. It participates in carbohydrate degradation; pentose phosphate pathway; D-ribose 5-phosphate from D-ribulose 5-phosphate (non-oxidative stage): step 1/1. The protein is Ribose-5-phosphate isomerase (RKI1) of Candida glabrata (strain ATCC 2001 / BCRC 20586 / JCM 3761 / NBRC 0622 / NRRL Y-65 / CBS 138) (Yeast).